A 470-amino-acid chain; its full sequence is ATP synthase subunit beta (470 aa).

155–162 contributes to the ATP binding site; the sequence is GGAGVGKT.

Belongs to the ATPase alpha/beta chains family. As to quaternary structure, F-type ATPases have 2 components, CF(1) - the catalytic core - and CF(0) - the membrane proton channel. CF(1) has five subunits: alpha(3), beta(3), gamma(1), delta(1), epsilon(1). CF(0) has three main subunits: a(1), b(2) and c(9-12). The alpha and beta chains form an alternating ring which encloses part of the gamma chain. CF(1) is attached to CF(0) by a central stalk formed by the gamma and epsilon chains, while a peripheral stalk is formed by the delta and b chains.

It localises to the cell membrane. It carries out the reaction ATP + H2O + 4 H(+)(in) = ADP + phosphate + 5 H(+)(out). In terms of biological role, produces ATP from ADP in the presence of a proton gradient across the membrane. The catalytic sites are hosted primarily by the beta subunits. This Staphylococcus saprophyticus subsp. saprophyticus (strain ATCC 15305 / DSM 20229 / NCIMB 8711 / NCTC 7292 / S-41) protein is ATP synthase subunit beta.